The sequence spans 66 residues: UPF0337 protein BP1738 (66 aa).

This sequence belongs to the UPF0337 (CsbD) family.

The chain is UPF0337 protein BP1738 from Bordetella pertussis (strain Tohama I / ATCC BAA-589 / NCTC 13251).